The sequence spans 394 residues: Elongation factor Tu 1 (394 aa).

One can recognise a tr-type G domain in the interval 10–204 (KPHVNVGTIG…ALDSYIPQPE (195 aa)). The tract at residues 19-26 (GHVDHGKT) is G1. 19-26 (GHVDHGKT) is a GTP binding site. Position 26 (Thr-26) interacts with Mg(2+). The segment at 60–64 (GITIN) is G2. Positions 81–84 (DCPG) are G3. GTP contacts are provided by residues 81–85 (DCPGH) and 136–139 (NKCD). The interval 136 to 139 (NKCD) is G4. The G5 stretch occupies residues 174–176 (SAL).

The protein belongs to the TRAFAC class translation factor GTPase superfamily. Classic translation factor GTPase family. EF-Tu/EF-1A subfamily. In terms of assembly, monomer.

Its subcellular location is the cytoplasm. The enzyme catalyses GTP + H2O = GDP + phosphate + H(+). GTP hydrolase that promotes the GTP-dependent binding of aminoacyl-tRNA to the A-site of ribosomes during protein biosynthesis. This Yersinia pestis bv. Antiqua (strain Nepal516) protein is Elongation factor Tu 1.